Reading from the N-terminus, the 356-residue chain is Histidinol-phosphate aminotransferase (356 aa).

Lys214 carries the N6-(pyridoxal phosphate)lysine modification.

The protein belongs to the class-II pyridoxal-phosphate-dependent aminotransferase family. Histidinol-phosphate aminotransferase subfamily. Homodimer. Requires pyridoxal 5'-phosphate as cofactor.

It catalyses the reaction L-histidinol phosphate + 2-oxoglutarate = 3-(imidazol-4-yl)-2-oxopropyl phosphate + L-glutamate. It functions in the pathway amino-acid biosynthesis; L-histidine biosynthesis; L-histidine from 5-phospho-alpha-D-ribose 1-diphosphate: step 7/9. This Shigella sonnei (strain Ss046) protein is Histidinol-phosphate aminotransferase.